The primary structure comprises 456 residues: Adenylosuccinate synthetase isozyme 2 (456 aa).

Residues 1–14 are compositionally biased toward polar residues; that stretch reads MSISESSPAATSLP. The interval 1 to 24 is disordered; it reads MSISESSPAATSLPNGDCGRPRAR. Residues 39-45 and 67-69 contribute to the GTP site; these read GDEGKGK and GHT. Aspartate 40 functions as the Proton acceptor in the catalytic mechanism. Aspartate 40 and glycine 67 together coordinate Mg(2+). Aspartate 40 contacts substrate. Residues 40-43, 65-68, threonine 162, arginine 176, asparagine 255, threonine 270, and arginine 334 contribute to the IMP site; these read DEGK and NAGH. Residue histidine 68 is the Proton donor of the active site. 330–336 is a binding site for substrate; it reads VTTGRKR. GTP is bound by residues arginine 336, 362–364, and 444–447; these read KLD and GVGK.

This sequence belongs to the adenylosuccinate synthetase family. Homodimer. Requires Mg(2+) as cofactor.

It is found in the cytoplasm. It localises to the mitochondrion. The catalysed reaction is IMP + L-aspartate + GTP = N(6)-(1,2-dicarboxyethyl)-AMP + GDP + phosphate + 2 H(+). The protein operates within purine metabolism; AMP biosynthesis via de novo pathway; AMP from IMP: step 1/2. With respect to regulation, inhibited competitively by AMP and IMP and non-competitively by fructose 1,6-bisphosphate. Plays an important role in the de novo pathway and in the salvage pathway of purine nucleotide biosynthesis. Catalyzes the first committed step in the biosynthesis of AMP from IMP. The sequence is that of Adenylosuccinate synthetase isozyme 2 (Adss2) from Mus musculus (Mouse).